The sequence spans 86 residues: Large ribosomal subunit protein bL31 (86 aa).

The tract at residues 64–86 (KYGMGSANSSESKDQKEEKDSKK) is disordered. Residues 74–86 (ESKDQKEEKDSKK) show a composition bias toward basic and acidic residues.

It belongs to the bacterial ribosomal protein bL31 family. Type A subfamily. Part of the 50S ribosomal subunit.

Its function is as follows. Binds the 23S rRNA. The polypeptide is Large ribosomal subunit protein bL31 (Prochlorococcus marinus (strain MIT 9301)).